Consider the following 148-residue polypeptide: Protein TIFY 5B (148 aa).

The Tify domain occupies 54–89; the sequence is PKQESQILTIFYNGHMCVSSDLTHLEANAILSLASR.

It belongs to the TIFY/JAZ family. Ubiquitinated. Targeted for degradation by the SCF(COI1) E3 ubiquitin ligase-proteasome pathway during jasmonate signaling.

The protein localises to the nucleus. Its function is as follows. Repressor of jasmonate responses. The polypeptide is Protein TIFY 5B (TIFY 5B) (Arabidopsis thaliana (Mouse-ear cress)).